We begin with the raw amino-acid sequence, 198 residues long: Outer-membrane lipoprotein carrier protein (198 aa).

Positions 1–17 (MKKFLFSLCLLSSTVLA) are cleaved as a signal peptide.

Belongs to the LolA family. In terms of assembly, monomer.

The protein resides in the periplasm. Functionally, participates in the translocation of lipoproteins from the inner membrane to the outer membrane. Only forms a complex with a lipoprotein if the residue after the N-terminal Cys is not an aspartate (The Asp acts as a targeting signal to indicate that the lipoprotein should stay in the inner membrane). This chain is Outer-membrane lipoprotein carrier protein, found in Aliivibrio fischeri (strain MJ11) (Vibrio fischeri).